The sequence spans 221 residues: Small ribosomal subunit protein uS5 (221 aa).

The region spanning 46–109 (LKDEVINIER…DNAKLNIIEI (64 aa)) is the S5 DRBM domain.

The protein belongs to the universal ribosomal protein uS5 family. As to quaternary structure, part of the 30S ribosomal subunit. Contacts protein S4.

Functionally, with S4 and S12 plays an important role in translational accuracy. The sequence is that of Small ribosomal subunit protein uS5 from Picrophilus torridus (strain ATCC 700027 / DSM 9790 / JCM 10055 / NBRC 100828 / KAW 2/3).